The following is a 257-amino-acid chain: MKISDFMLEYEKFCPKELAVEGDPVGLQVGNPNDELTKVLVTLDIREQTVAEAKALGVNLIIAKHPLIFRPLSALTSMNDQEKLVLDLARAGIAVYTSHTNIDVVTGGLNDYFSQLLGMTDIEVLDDEEGLGRVGNIELTELSVLTEKVKASFGLDRLRLITYDHNLTQKIGRIAICGGSGGKLWPKALEKKADIYITGDIYYHVGHDMLSAGLLGIDPGHYIEHAFIRLVADKLRSFDMGVKIYESQEKTNPFYDI.

The a divalent metal cation site is built by histidine 65, aspartate 103, histidine 221, and glutamate 224.

The protein belongs to the GTP cyclohydrolase I type 2/NIF3 family. As to quaternary structure, homohexamer.

This Lactococcus lactis subsp. lactis (strain IL1403) (Streptococcus lactis) protein is GTP cyclohydrolase 1 type 2 homolog (ykiD).